We begin with the raw amino-acid sequence, 455 residues long: MFS-type transporter SLC18B1 (455 aa).

M1 carries the post-translational modification N-acetylmethionine. Positions 1–26 (MDTAGPPAPAGTEGDGPGGSTGETSR) are disordered. The Cytoplasmic segment spans residues 1 to 32 (MDTAGPPAPAGTEGDGPGGSTGETSRRLSKEQ). S20 bears the Phosphoserine mark. A helical transmembrane segment spans residues 33-53 (IFVLVSAASMNLGCMMTYSIL). The Extracellular segment spans residues 54 to 69 (GPFFPKEAEKKGASNT). A helical membrane pass occupies residues 70–90 (TIGMIFGCYALFELLASLVFG). At 91–99 (KYLVHIGAK) the chain is on the cytoplasmic side. The helical transmembrane segment at 100–120 (FMFIAGMFVSGGVTILFGVLD) threads the bilayer. Over 121–126 (QLPEGP) the chain is Extracellular. A helical transmembrane segment spans residues 127-147 (IFIAMCFLVRIVDAIGFGAAI). Residues 148 to 166 (TASSSILAKAFPNNVATVM) are Cytoplasmic-facing. The chain crosses the membrane as a helical span at residues 167-187 (GSLEVFSGLGLVAGPPLGGLL). Over 188–194 (YQSFGYE) the chain is Extracellular. Residues 195–215 (VPFIFLGCIVLLMIPLNLCIL) form a helical membrane-spanning segment. The Cytoplasmic portion of the chain corresponds to 216–232 (PSYESDAGKQSFWKLVT). Residues 233-253 (LPKIGLIAFVIISLSSCFGFL) traverse the membrane as a helical segment. Topologically, residues 254–271 (DPTLSLFVMKKFSLSTGY) are extracellular. A helical membrane pass occupies residues 272–292 (VGLVFLGLSLSYAISSPLFGL). Residues 293 to 303 (LSDKMPNLRKW) are Cytoplasmic-facing. The chain crosses the membrane as a helical span at residues 304 to 324 (FLVFGNLITAGCYMLLGPIPL). Residues 325-330 (LHIKSQ) are Extracellular-facing. A helical membrane pass occupies residues 331 to 351 (LWLLVLVLVINGVSAGMSIIP). The Cytoplasmic portion of the chain corresponds to 352 to 376 (TFPEMLSCAYANGFEDGISTLGLVS). A helical membrane pass occupies residues 377 to 397 (GLFGAMWSVGAFMGPILGGFL). The Extracellular segment spans residues 398 to 406 (CEKIGFEWA). Residues 407 to 427 (AAIQGLWTLLSGVAMALFYLW) form a helical membrane-spanning segment. The Cytoplasmic portion of the chain corresponds to 428-455 (EDSTMRRSKAQNILGTEEEQAALLPNDT).

In terms of tissue distribution, expressed in brain structures, particularly in hippocampus, cortex, and cerebellum (at protein level). Expressed in astrocytes and hippocampal neurons (at protein level). Expressed in peritoneal mast cells.

It localises to the cytoplasmic vesicle. It is found in the secretory vesicle membrane. The protein localises to the secretory vesicle. The protein resides in the synaptic vesicle membrane. It carries out the reaction spermine(in) + n H(+)(out) = spermine(out) + n H(+)(in). It catalyses the reaction spermidine(in) + n H(+)(out) = spermidine(out) + n H(+)(in). The enzyme catalyses serotonin(in) + n H(+)(out) = serotonin(out) + n H(+)(in). Its function is as follows. Proton-coupled polyamine antiporter involved in the translocation of polyamines from cytosol into secretory vesicles prior to their release via exocytosis. Uses the electrochemical proton gradient generated by a V-type proton-pumping ATPase to couple the efflux of protons with the uptake of a polyamine molecule. Facilitates vesicular storage of spermine and spermidine in astrocytes with an impact on glutamatergic neuronal transmission and memory formation. Upon antigen stimulation, regulates polyamine accumulation and release in mast cell secretory granules, which in turn potentiates mast cell degranulation and histamine secretion. This is MFS-type transporter SLC18B1 from Rattus norvegicus (Rat).